A 931-amino-acid chain; its full sequence is Adhesion G protein-coupled receptor E1 (931 aa).

An N-terminal signal peptide occupies residues 1 to 27 (MWGFWLLLFWGFSGMYRWGMTTLPTLG). The Extracellular segment spans residues 28-644 (QTLGGVNECQ…IMASGELTME (617 aa)). 2 EGF-like domains span residues 32–80 (GVNE…VECQ) and 81–132 (DVNE…FLCA). 21 disulfide bridges follow: Cys36–Cys48, Cys42–Cys57, Cys59–Cys79, Cys85–Cys98, Cys92–Cys107, Cys109–Cys131, Cys137–Cys149, Cys143–Cys158, Cys160–Cys171, Cys177–Cys189, Cys183–Cys198, Cys200–Cys220, Cys226–Cys239, Cys233–Cys248, Cys250–Cys270, Cys276–Cys286, Cys280–Cys295, Cys297–Cys317, Cys323–Cys336, Cys330–Cys345, and Cys347–Cys366. Residues 133-172 (DVDECLTIGICPKYSNCSNSVGSYSCTCQPGFVLNGSICE) enclose the EGF-like 3; calcium-binding domain. Asn148 and Asn167 each carry an N-linked (GlcNAc...) asparagine glycan. In terms of domain architecture, EGF-like 4; calcium-binding spans 173–221 (DEDECVTRDVCPEHATCHNTLGSYYCTCNSGLESSGGGPMFQGLDESCE). One can recognise an EGF-like 5; calcium-binding domain in the interval 222 to 271 (DVDECSRNSTLCGPTFICINTLGSYSCSCPAGFSLPTFQILGHPADGNCT). A glycan (N-linked (GlcNAc...) asparagine) is linked at Asn229. N-linked (GlcNAc...) asparagine glycans are attached at residues Asn269 and Asn283. Positions 272 to 318 (DIDECDDTCPLNSSCTNTIGSYFCTCHPGFASSNGQLNFKDLEVTCE) constitute an EGF-like 6; calcium-binding domain. Residues 319–367 (DIDECTQDPLQCGLNSVCTNVPGSYICGCLPDFQMDPEGSQGYGNFNCK) enclose the EGF-like 7; calcium-binding domain. Asn405, Asn417, Asn474, and Asn498 each carry an N-linked (GlcNAc...) asparagine glycan. The region spanning 482 to 642 (EYLDIESKVI…AIIMASGELT (161 aa)) is the GAIN-B domain. The Cell attachment site motif lies at 506 to 508 (RGD). Cystine bridges form between Cys595–Cys624 and Cys612–Cys626. Residues 595 to 642 (CVSWNTDVEDGRWTPSGCEIVEASETHTVCSCNRMANLAIIMASGELT) are GPS. Residues 645-672 (FSLYIISHVGTVISLVCLALAIATFLLC) traverse the membrane as a helical segment. At 673–679 (RAVQNHN) the chain is on the cytoplasmic side. Residues 680–701 (TYMHLHLCVCLFLAKILFLTGI) form a helical membrane-spanning segment. Residues 702-711 (DKTDNQTACA) are Extracellular-facing. The N-linked (GlcNAc...) asparagine glycan is linked to Asn706. The chain crosses the membrane as a helical span at residues 712 to 735 (IIAGFLHYLFLACFFWMLVEAVML). The Cytoplasmic portion of the chain corresponds to 736-754 (FLMVRNLKVVNYFSSRNIK). Residues 755-776 (MLHLCAFGYGLPVLVVIISASV) traverse the membrane as a helical segment. The Extracellular portion of the chain corresponds to 777–792 (QPRGYGMHNRCWLNTE). A helical transmembrane segment spans residues 793–821 (TGFIWSFLGPVCMIITINSVLLAWTLWVL). Residues 822-839 (RQKLCSVSSEVSKLKDTR) are Cytoplasmic-facing. The helical transmembrane segment at 840–859 (LLTFKAIAQIFILGCSWVLG) threads the bilayer. At 860–874 (IFQIGPLASIMAYLF) the chain is on the extracellular side. Residues 875–897 (TIINSLQGAFIFLIHCLLNRQVR) traverse the membrane as a helical segment. Over 898-931 (DEYKKLLTRKTDLSSHSQTSGILLSSMPSTSKMG) the chain is Cytoplasmic.

The protein belongs to the G-protein coupled receptor 2 family. Adhesion G-protein coupled receptor (ADGR) subfamily. As to expression, in macrophages; but absent from those which are localized within T-cell areas of lymph nodes and spleen. Low level of expression on blood monocytes.

It localises to the cell membrane. In terms of biological role, orphan receptor involved in cell adhesion and probably in cell-cell interactions specifically involving cells of the immune system. May play a role in regulatory T-cells (Treg) development. This is Adhesion G protein-coupled receptor E1 (Adgre1) from Mus musculus (Mouse).